The chain runs to 274 residues: tRNA pseudouridine synthase A (274 aa).

The Nucleophile role is filled by Asp54. Tyr112 is a substrate binding site.

Belongs to the tRNA pseudouridine synthase TruA family. As to quaternary structure, homodimer.

It carries out the reaction uridine(38/39/40) in tRNA = pseudouridine(38/39/40) in tRNA. Its function is as follows. Formation of pseudouridine at positions 38, 39 and 40 in the anticodon stem and loop of transfer RNAs. The sequence is that of tRNA pseudouridine synthase A from Solidesulfovibrio magneticus (strain ATCC 700980 / DSM 13731 / RS-1) (Desulfovibrio magneticus).